A 498-amino-acid chain; its full sequence is Probable global transactivator (498 aa).

In terms of domain architecture, Helicase ATP-binding spans 43–206 (RERRGRPHGG…YAIIHFLRCR (164 aa)). 55-63 (ADDMGLGKT) is a binding site for ATP. The DEAH box motif lies at 157–160 (DEAH). Residues 337 to 493 (ELVQRVLDTP…RTALNYEDIK (157 aa)) enclose the Helicase C-terminal domain.

Belongs to the SNF2/RAD54 helicase family.

This Orgyia pseudotsugata (Douglas-fir tussock moth) protein is Probable global transactivator (GTA).